The sequence spans 229 residues: GTP cyclohydrolase 1 (229 aa).

A disordered region spans residues 1-26 (MDAKIKPIRGTNPAEGRPEFQPAELE). Residues C118, H121, and C189 each coordinate Zn(2+).

This sequence belongs to the GTP cyclohydrolase I family. Toroid-shaped homodecamer, composed of two pentamers of five dimers.

It catalyses the reaction GTP + H2O = 7,8-dihydroneopterin 3'-triphosphate + formate + H(+). It participates in cofactor biosynthesis; 7,8-dihydroneopterin triphosphate biosynthesis; 7,8-dihydroneopterin triphosphate from GTP: step 1/1. In Rhodopseudomonas palustris (strain ATCC BAA-98 / CGA009), this protein is GTP cyclohydrolase 1.